The sequence spans 359 residues: Phospho-N-acetylmuramoyl-pentapeptide-transferase (359 aa).

Residues 1–25 (MLYQLALLLKDYWFAFNVLKYITFR) are Periplasmic-facing. Residues 26–48 (SFTAVLIAFFLTLVLSPSFINRL) traverse the membrane as a helical segment. The Cytoplasmic segment spans residues 49–74 (RKIQRLFGGYVREYTPESHEVKKYTP). Lys-70 and Thr-75 together coordinate muraymycin D2. Residues 75 to 92 (TMGGIVILIVVTLSTLLL) form a helical membrane-spanning segment. Over 93–98 (MRWDIK) the chain is Periplasmic. Residues 99–120 (YTWVVLLSFLSFGTIGFWDDYV) traverse the membrane as a helical segment. Topologically, residues 121-130 (KLKNKKGISI) are cytoplasmic. A helical transmembrane segment spans residues 131–152 (KTKFLLQVLSASLISVLIYYWA). Over 153–172 (DIDTILYFPFFKELYVDLGV) the chain is Periplasmic. The helical transmembrane segment at 173–194 (LYLPFAVFVIVGSANAVNLTDG) threads the bilayer. Asn-190, Asp-193, and Asp-196 together coordinate muraymycin D2. At 195–197 (LDG) the chain is on the cytoplasmic side. Residues 198–218 (LAIGPAMTTATALGVVAYAVG) form a helical membrane-spanning segment. At 219–233 (HSKIAQYLNIPYVPY) the chain is on the periplasmic side. Residues 234–255 (AGELTVFCFALVGAGLGFLWFN) form a helical membrane-spanning segment. Topologically, residues 256–264 (SFPAQMFMG) are cytoplasmic. Muraymycin D2-binding residues include Gly-264 and Ser-268. The helical transmembrane segment at 265 to 280 (DVGSLSIGASLATVAL) threads the bilayer. Residues 281–284 (LTKS) are Periplasmic-facing. The chain crosses the membrane as a helical span at residues 285-310 (EFIFAVAAGVFVFETISVILQIIYFR). Positions 305 and 321 each coordinate muraymycin D2. Topologically, residues 311-332 (WTGGKRLFKRAPFHHHLELNGL) are cytoplasmic. Residues 333–355 (PEPKIVVRMWIISILLAIIAISM) traverse the membrane as a helical segment. Topologically, residues 356–359 (LKLR) are periplasmic.

The protein belongs to the glycosyltransferase 4 family. MraY subfamily. In terms of assembly, homodimer. Mg(2+) is required as a cofactor. The cofactor is Mn(2+).

Its subcellular location is the cell inner membrane. It carries out the reaction UDP-N-acetyl-alpha-D-muramoyl-L-alanyl-gamma-D-glutamyl-meso-2,6-diaminopimeloyl-D-alanyl-D-alanine + di-trans,octa-cis-undecaprenyl phosphate = di-trans,octa-cis-undecaprenyl diphospho-N-acetyl-alpha-D-muramoyl-L-alanyl-D-glutamyl-meso-2,6-diaminopimeloyl-D-alanyl-D-alanine + UMP. Its pathway is cell wall biogenesis; peptidoglycan biosynthesis. With respect to regulation, inhibited by natural nucleoside antibiotics including tunicamycin, capuramycin and muraymycin. Usually the cofactor magnesium is not required for antibiotic binding. Its function is as follows. Catalyzes the initial step of the lipid cycle reactions in the biosynthesis of the cell wall peptidoglycan: transfers peptidoglycan precursor phospho-MurNAc-pentapeptide from UDP-MurNAc-pentapeptide onto the lipid carrier undecaprenyl phosphate, yielding undecaprenyl-pyrophosphoryl-MurNAc-pentapeptide, known as lipid I. In Aquifex aeolicus (strain VF5), this protein is Phospho-N-acetylmuramoyl-pentapeptide-transferase.